Here is a 546-residue protein sequence, read N- to C-terminus: Intermembrane transport protein PqiB (546 aa).

The Cytoplasmic segment spans residues 1–15 (MESNNGEAKIQKVKN). Residues 16–36 (WSPVWIFPIVTALIGAWVLFY) traverse the membrane as a helical segment. Over 37–546 (HYSHQGPEVT…KDPEPKRAKQ (510 aa)) the chain is Periplasmic. MCE/MlaD regions lie at residues 42–133 (GPEV…LQPG), 158–217 (IRVI…NNVR), and 285–389 (HIDY…LDFY). Residues 437 to 464 (IEQATSTLSESQRTMKNLQTTLDSMNKI) are a coiled coil.

Belongs to the PqiB family. Homohexamer. May form a complex composed of PqiA, PqiB and PqiC. Interacts with PqiC.

The protein localises to the cell inner membrane. Forms a tunnel that spans the entire periplasmic space. Could be implicated in lipid transport between the inner membrane and the outer membrane. Binds phospholipids. Required for outer membrane homeostasis. Contributes to membrane integrity. This is Intermembrane transport protein PqiB from Escherichia coli (strain K12).